The sequence spans 238 residues: Thrombin-like enzyme gyroxin B2.1 (238 aa).

The Peptidase S1 domain occupies Val1 to Ala229. Cystine bridges form between Cys7–Cys141, Cys28–Cys44, Cys78–Cys236, Cys120–Cys190, Cys152–Cys169, and Cys180–Cys205. The active-site Charge relay system is the His43. Asn81 carries an N-linked (GlcNAc...) asparagine glycan. The active-site Charge relay system is Asp88. Catalysis depends on Ser184, which acts as the Charge relay system.

This sequence belongs to the peptidase S1 family. Snake venom subfamily. As to quaternary structure, monomer. In terms of tissue distribution, expressed by the venom gland.

It localises to the secreted. In terms of biological role, thrombin-like snake venom serine protease. Displays a specificity similar to trypsin. Releases only fibrinopeptide A in the conversion of fibrinogen (FGA) to fibrin. Shows coagulant, esterase and amidase activities. Reversibly increases the permeability of the blood brain barrier (BBB) in mice. Induces the barrel rotation syndrome in mice, which is manifested by gyroxin-like, rapid rolling motions. This syndrome may be due to its effect on BBB permeability, and certainly also to other actions affecting endogenous substrates present in the endothelium, nervous tissues or blood. This chain is Thrombin-like enzyme gyroxin B2.1, found in Crotalus durissus terrificus (South American rattlesnake).